A 358-amino-acid polypeptide reads, in one-letter code: Isopentenyl-diphosphate delta-isomerase (358 aa).

12 to 13 (RK) serves as a coordination point for substrate. FMN contacts are provided by residues 69–71 (AMT), Ser-99, and Asn-128. Gln-158 contacts substrate. Glu-159 is a binding site for Mg(2+). FMN contacts are provided by residues Lys-190, Thr-220, 267–269 (GIR), and 288–289 (AG).

Belongs to the IPP isomerase type 2 family. In terms of assembly, homooctamer. Dimer of tetramers. FMN serves as cofactor. NADPH is required as a cofactor. It depends on Mg(2+) as a cofactor.

It localises to the cytoplasm. It catalyses the reaction isopentenyl diphosphate = dimethylallyl diphosphate. Its function is as follows. Involved in the biosynthesis of isoprenoids. Catalyzes the 1,3-allylic rearrangement of the homoallylic substrate isopentenyl (IPP) to its allylic isomer, dimethylallyl diphosphate (DMAPP). This Listeria monocytogenes serotype 4a (strain HCC23) protein is Isopentenyl-diphosphate delta-isomerase.